We begin with the raw amino-acid sequence, 178 residues long: NADH-quinone oxidoreductase subunit I 2 (178 aa).

4Fe-4S ferredoxin-type domains follow at residues 46–78 (IVLTRDPDGGERCVACYLCSAVCPVSCISMQAA) and 88–117 (AWFRINFARCIYCGLCEEACPTSAIQLTPF). Residues cysteine 58, cysteine 61, cysteine 64, cysteine 68, cysteine 97, cysteine 100, cysteine 103, and cysteine 107 each coordinate [4Fe-4S] cluster.

This sequence belongs to the complex I 23 kDa subunit family. As to quaternary structure, NDH-1 is composed of 14 different subunits. Subunits NuoA, H, J, K, L, M, N constitute the membrane sector of the complex. It depends on [4Fe-4S] cluster as a cofactor.

It localises to the cell inner membrane. The catalysed reaction is a quinone + NADH + 5 H(+)(in) = a quinol + NAD(+) + 4 H(+)(out). Functionally, NDH-1 shuttles electrons from NADH, via FMN and iron-sulfur (Fe-S) centers, to quinones in the respiratory chain. The immediate electron acceptor for the enzyme in this species is believed to be ubiquinone. Couples the redox reaction to proton translocation (for every two electrons transferred, four hydrogen ions are translocated across the cytoplasmic membrane), and thus conserves the redox energy in a proton gradient. The polypeptide is NADH-quinone oxidoreductase subunit I 2 (Syntrophobacter fumaroxidans (strain DSM 10017 / MPOB)).